A 143-amino-acid polypeptide reads, in one-letter code: Putative pre-16S rRNA nuclease (143 aa).

Belongs to the YqgF nuclease family.

It is found in the cytoplasm. In terms of biological role, could be a nuclease involved in processing of the 5'-end of pre-16S rRNA. The chain is Putative pre-16S rRNA nuclease from Leuconostoc mesenteroides subsp. mesenteroides (strain ATCC 8293 / DSM 20343 / BCRC 11652 / CCM 1803 / JCM 6124 / NCDO 523 / NBRC 100496 / NCIMB 8023 / NCTC 12954 / NRRL B-1118 / 37Y).